A 508-amino-acid polypeptide reads, in one-letter code: 2,3-bisphosphoglycerate-independent phosphoglycerate mutase (508 aa).

Mn(2+) is bound by residues Asp11 and Ser61. Ser61 acts as the Phosphoserine intermediate in catalysis. Substrate is bound by residues His122, Arg150–Asp151, Arg182, Arg188, Arg257–Arg260, and Lys332. Asp397, His401, Asp438, His439, and His456 together coordinate Mn(2+).

Belongs to the BPG-independent phosphoglycerate mutase family. In terms of assembly, monomer. Mn(2+) serves as cofactor.

The catalysed reaction is (2R)-2-phosphoglycerate = (2R)-3-phosphoglycerate. It functions in the pathway carbohydrate degradation; glycolysis; pyruvate from D-glyceraldehyde 3-phosphate: step 3/5. Its function is as follows. Catalyzes the interconversion of 2-phosphoglycerate and 3-phosphoglycerate. The sequence is that of 2,3-bisphosphoglycerate-independent phosphoglycerate mutase from Mycoplasma pneumoniae (strain ATCC 29342 / M129 / Subtype 1) (Mycoplasmoides pneumoniae).